The chain runs to 83 residues: Large ribosomal subunit protein eL14 (83 aa).

This sequence belongs to the eukaryotic ribosomal protein eL14 family.

The sequence is that of Large ribosomal subunit protein eL14 from Thermococcus gammatolerans (strain DSM 15229 / JCM 11827 / EJ3).